We begin with the raw amino-acid sequence, 188 residues long: ATP synthase subunit delta (188 aa).

The protein belongs to the ATPase delta chain family. In terms of assembly, F-type ATPases have 2 components, F(1) - the catalytic core - and F(0) - the membrane proton channel. F(1) has five subunits: alpha(3), beta(3), gamma(1), delta(1), epsilon(1). F(0) has three main subunits: a(1), b(2) and c(10-14). The alpha and beta chains form an alternating ring which encloses part of the gamma chain. F(1) is attached to F(0) by a central stalk formed by the gamma and epsilon chains, while a peripheral stalk is formed by the delta and b chains.

The protein resides in the cell inner membrane. Its function is as follows. F(1)F(0) ATP synthase produces ATP from ADP in the presence of a proton or sodium gradient. F-type ATPases consist of two structural domains, F(1) containing the extramembraneous catalytic core and F(0) containing the membrane proton channel, linked together by a central stalk and a peripheral stalk. During catalysis, ATP synthesis in the catalytic domain of F(1) is coupled via a rotary mechanism of the central stalk subunits to proton translocation. Functionally, this protein is part of the stalk that links CF(0) to CF(1). It either transmits conformational changes from CF(0) to CF(1) or is implicated in proton conduction. The sequence is that of ATP synthase subunit delta from Rhizobium leguminosarum bv. trifolii (strain WSM2304).